A 119-amino-acid chain; its full sequence is Hemerythrin-like protein (119 aa).

Fe cation is bound by residues H26, H56, E60, H75, H79, H107, and D112.

It belongs to the hemerythrin family.

Functionally, oxygen-binding protein. The oxygen-binding site contains two iron atoms. The protein is Hemerythrin-like protein (nfa1) of Naegleria fowleri (Brain eating amoeba).